We begin with the raw amino-acid sequence, 246 residues long: MNVLDNSVIIKGSKNGITVFLDEEMPFEELLENVSDKFKNASKFFNNATMAISFDGRNLSAEEEKRILNVISDVSELNIVCVLDENNDIKSVYEEAVKKAMNSFNISHQPERQKITDPKTTCMFYKGTLRSGQVFEADGSVVVLGDVNPGGKVVAKGSVIVLGSLKGNIFAGVDGNENAFVVALEMSPMQIKIGDIIARSSDSGVNKISKGKNKSKILEPKIAYVYDQNIYVEDLEQNALDDISLD.

The protein belongs to the MinC family. As to quaternary structure, interacts with MinD and FtsZ.

Cell division inhibitor that blocks the formation of polar Z ring septums. Rapidly oscillates between the poles of the cell to destabilize FtsZ filaments that have formed before they mature into polar Z rings. Prevents FtsZ polymerization. The sequence is that of Probable septum site-determining protein MinC from Lachnospira eligens (strain ATCC 27750 / DSM 3376 / VPI C15-48 / C15-B4) (Eubacterium eligens).